Reading from the N-terminus, the 424-residue chain is D-inositol 3-phosphate glycosyltransferase (424 aa).

H16 serves as a coordination point for 1D-myo-inositol 3-phosphate. UDP-N-acetyl-alpha-D-glucosamine contacts are provided by residues 22-23 (QP) and G30. 1D-myo-inositol 3-phosphate is bound by residues 27-32 (DAGGMN), K85, Y118, T142, and R162. UDP-N-acetyl-alpha-D-glucosamine contacts are provided by R240 and K245. Mg(2+) contacts are provided by M313, R314, and A316. UDP-N-acetyl-alpha-D-glucosamine is bound by residues E326 and E334. Residue T340 participates in Mg(2+) binding.

The protein belongs to the glycosyltransferase group 1 family. MshA subfamily. In terms of assembly, homodimer.

The catalysed reaction is 1D-myo-inositol 3-phosphate + UDP-N-acetyl-alpha-D-glucosamine = 1D-myo-inositol 2-acetamido-2-deoxy-alpha-D-glucopyranoside 3-phosphate + UDP + H(+). Its function is as follows. Catalyzes the transfer of a N-acetyl-glucosamine moiety to 1D-myo-inositol 3-phosphate to produce 1D-myo-inositol 2-acetamido-2-deoxy-glucopyranoside 3-phosphate in the mycothiol biosynthesis pathway. The polypeptide is D-inositol 3-phosphate glycosyltransferase (Jonesia denitrificans (strain ATCC 14870 / DSM 20603 / BCRC 15368 / CIP 55.134 / JCM 11481 / NBRC 15587 / NCTC 10816 / Prevot 55134) (Listeria denitrificans)).